The sequence spans 416 residues: Gamma-glutamyl phosphate reductase (416 aa).

Belongs to the gamma-glutamyl phosphate reductase family.

The protein localises to the cytoplasm. The enzyme catalyses L-glutamate 5-semialdehyde + phosphate + NADP(+) = L-glutamyl 5-phosphate + NADPH + H(+). It functions in the pathway amino-acid biosynthesis; L-proline biosynthesis; L-glutamate 5-semialdehyde from L-glutamate: step 2/2. Its function is as follows. Catalyzes the NADPH-dependent reduction of L-glutamate 5-phosphate into L-glutamate 5-semialdehyde and phosphate. The product spontaneously undergoes cyclization to form 1-pyrroline-5-carboxylate. This is Gamma-glutamyl phosphate reductase from Halalkalibacterium halodurans (strain ATCC BAA-125 / DSM 18197 / FERM 7344 / JCM 9153 / C-125) (Bacillus halodurans).